Here is a 1001-residue protein sequence, read N- to C-terminus: Non-canonical poly(A) RNA polymerase protein Trf4-1 (1001 aa).

Composition is skewed to low complexity over residues 44–86 and 127–163; these read TING…NNSS and RNSTNINTTSGGSTSSSADSTTNRDNNSPANSSSTNG. 2 disordered regions span residues 44–92 and 115–238; these read TING…PYLS and QQQQ…AGGA. The span at 164–178 shows a compositional bias: gly residues; the sequence is PGAGTGTSTGAGGTG. Residues 179 to 216 are compositionally biased toward low complexity; sequence TNSPATTASSTAATTTGPATSMSDTSNNPPQSTTTPAS. The Mn(2+) site is built by aspartate 328 and aspartate 330. Residues 458–517 form the PAP-associated domain; it reads NLGVLLLEFFELYGRRFNYMKIGISIKNGGRYMPKDELQRDMVDGHRPSLLCIEDPLTPG. 4 disordered regions span residues 631–652, 687–740, 767–963, and 977–1001; these read PTAHGHSHAHSHSHGHAHPGAH, QQQQ…AQEV, ASNS…LRGT, and SSESSIASSSSSSSRSGQDQQRDER. Residues 635–649 show a composition bias toward basic residues; sequence GHSHAHSHSHGHAHP. Composition is skewed to low complexity over residues 687–708 and 768–788; these read QQQQQNATAHTHSQQQTQNQSQ and SNSWSGNGNGNGNSSSSTGSS. Residues 827–841 show a composition bias toward gly residues; the sequence is VGTGSNRGGGDGSGG. Polar residues predominate over residues 844–854; sequence YNQRNNHNSSG. Over residues 855-880 the composition is skewed to low complexity; sequence YYHQQYYVPPPMQQQLSKSNSSSNYH. The span at 881-912 shows a compositional bias: basic residues; it reads QQHHHSHSHGNHSHRQQHHHQQQHHHQQRPQH. Composition is skewed to low complexity over residues 932-955 and 977-992; these read SAGNASNSSSNCSNSSSSSGSNNS and SSESSIASSSSSSSRS.

It belongs to the DNA polymerase type-B-like family. Requires Mn(2+) as cofactor.

The protein resides in the cytoplasm. It carries out the reaction RNA(n) + ATP = RNA(n)-3'-adenine ribonucleotide + diphosphate. Involved in a post-transcriptional quality control mechanism limiting inappropriate expression of genetic information. Polyadenylation is required for the degradative activity of the exosome on several of its nuclear RNA substrates. Polyadenylates RNA processing and degradation intermediates of snRNAs and mRNAs. The chain is Non-canonical poly(A) RNA polymerase protein Trf4-1 from Drosophila melanogaster (Fruit fly).